A 704-amino-acid chain; its full sequence is Serotransferrin (704 aa).

The N-terminal stretch at 1 to 19 (MRPAVRALLACAVLGLCLA) is a signal peptide. Transferrin-like domains lie at 25 to 351 (VRWC…NLRE) and 364 to 689 (VKWC…NLRQ). Disulfide bonds link cysteine 28–cysteine 66 and cysteine 38–cysteine 57. Residue arginine 42 is modified to Dimethylated arginine. 2 residues coordinate Fe(3+): aspartate 81 and tyrosine 113. Disulfide bonds link cysteine 136–cysteine 217, cysteine 176–cysteine 192, cysteine 179–cysteine 200, cysteine 189–cysteine 202, and cysteine 250–cysteine 264. Positions 138, 142, 144, and 145 each coordinate hydrogencarbonate. Position 211 (tyrosine 211) interacts with Fe(3+). Residue histidine 272 participates in Fe(3+) binding. Intrachain disulfides connect cysteine 362/cysteine 622, cysteine 367/cysteine 399, cysteine 377/cysteine 390, cysteine 424/cysteine 699, cysteine 441/cysteine 663, cysteine 473/cysteine 549, cysteine 497/cysteine 690, cysteine 507/cysteine 521, cysteine 518/cysteine 532, cysteine 589/cysteine 603, and cysteine 641/cysteine 646. Fe(3+)-binding residues include aspartate 414 and tyrosine 449. Hydrogencarbonate contacts are provided by threonine 475, arginine 479, alanine 481, and glycine 482. Asparagine 514 carries an N-linked (GlcNAc...) asparagine glycan. Tyrosine 543 contributes to the Fe(3+) binding site. A Fe(3+)-binding site is contributed by histidine 611. A Phosphoserine modification is found at serine 691.

It belongs to the transferrin family. Monomer. Part of a complex composed of SLC40A1/ferroportin, TF/transferrin and HEPH/hephaestin that transfers iron from cells to transferrin. In terms of tissue distribution, expressed by the liver and secreted in plasma.

It is found in the secreted. Its function is as follows. Transferrins are iron binding transport proteins which can bind two Fe(3+) ions in association with the binding of an anion, usually bicarbonate. It is responsible for the transport of iron from sites of absorption and heme degradation to those of storage and utilization. Serum transferrin may also have a further role in stimulating cell proliferation. The protein is Serotransferrin (TF) of Bos taurus (Bovine).